The following is a 314-amino-acid chain: MTASLTTKFLNNTYENPFMNASGVHCMTTQELDELANSKAGAFITKSATTLEREGNPEPRYISVPLGSINSMGLPNEGIDYYLSYVLNRQKNYPDAPAIFFSVAGMSIDENLNLLRKIQDSEFNGITELNLSCPNVPGKPQVAYDFDLTKETLEKVFAFFKKPLGVKLPPYFDFAHFDIMAKILNEFPLAYVNSINSIGNGLFIDVEKESVVVKPKNGFGGIGGEYVKPTALANVRAFYTRLRPEIKVIGTGGIKSGKDAFEHLLCGASMLQIGTELQKEGVKIFERIEKELKDIMEAKGYTSIDQFRGKLNSI.

Substrate contacts are provided by residues Lys-46, 70–74 (NSMGL), and Asn-130. Lys-46 participates in a covalent cross-link: Glycyl lysine isopeptide (Lys-Gly) (interchain with G-Cter in ubiquitin). 46-47 (KS) serves as a coordination point for FMN. An FMN-binding site is contributed by Asn-130. The Nucleophile role is filled by Cys-133. FMN is bound by residues Lys-167 and Ile-195. 196–197 (NS) serves as a coordination point for substrate. Residues Gly-224, 252 to 253 (GG), and 274 to 275 (GT) each bind FMN.

This sequence belongs to the dihydroorotate dehydrogenase family. Type 1 subfamily. In terms of assembly, homodimer. FMN is required as a cofactor.

It localises to the cytoplasm. The catalysed reaction is (S)-dihydroorotate + fumarate = orotate + succinate. The protein operates within pyrimidine metabolism; UMP biosynthesis via de novo pathway. With respect to regulation, the activity is independent of the presence of oxygen. In terms of biological role, catalyzes the conversion of dihydroorotate to orotate with fumarate as the electron acceptor. Molecular oxygen can replace fumarate in vitro. Does not use oxaloacetate or NAD or NADP as electron acceptors. This is Dihydroorotate dehydrogenase (fumarate) (URA1) from Saccharomyces cerevisiae (strain ATCC 204508 / S288c) (Baker's yeast).